We begin with the raw amino-acid sequence, 365 residues long: MRDETAEQPAPLRSGLTTGSCATATSLAAARLLLGGVVADAVQIVLPKGKQVQMRLEFCRLTKDGAEAGTIKDAGDDPDVTHGALLYSRVQLMAEPGIRFIAGKGVGTVTRPGLVLPVGEPAINPVPRKMISDHLTLLAEETGYRGGFEVTVNVEGGEALALKTMNPRLGILGGLSILGTSGIVRPFSCAAYIASIHQGIDVAKTNGFLHIAACTGNASEDTMRRVYNLPEIALIEMGDFVGAVLKHLRKVPVDKLSLCGGFGKISKLAAGHMDLHSRHSSIDLPQLAEWAAAIGADDTLQQAIRGANTSQQALAIASAAGVALGDEVCRHALEFARSVVPAQVQVEVFAIDRQGGIVGHAGAFV.

It belongs to the CbiD family.

The catalysed reaction is Co-precorrin-5B + S-adenosyl-L-methionine = Co-precorrin-6A + S-adenosyl-L-homocysteine. It functions in the pathway cofactor biosynthesis; adenosylcobalamin biosynthesis; cob(II)yrinate a,c-diamide from sirohydrochlorin (anaerobic route): step 6/10. Its function is as follows. Catalyzes the methylation of C-1 in cobalt-precorrin-5B to form cobalt-precorrin-6A. This chain is Cobalt-precorrin-5B C(1)-methyltransferase, found in Pseudomonas fluorescens (strain Pf0-1).